The following is a 301-amino-acid chain: Probable alpha-L-glutamate ligase (301 aa).

In terms of domain architecture, ATP-grasp spans 104–287; that stretch reads LQLLSRRGIG…VAGIIIEHIE (184 aa). ATP-binding positions include K141, 178–179, D187, and 211–213; these read EY and RSN. Residues D248, E260, and N262 each contribute to the Mg(2+) site. 3 residues coordinate Mn(2+): D248, E260, and N262.

This sequence belongs to the RimK family. The cofactor is Mg(2+). Mn(2+) is required as a cofactor.

This Pseudomonas fluorescens (strain ATCC BAA-477 / NRRL B-23932 / Pf-5) protein is Probable alpha-L-glutamate ligase.